The primary structure comprises 317 residues: Ricin B-like lectin EULS3 (317 aa).

Residues 1 to 11 (MEHHHQHHRHH) show a composition bias toward basic residues. Positions 1–157 (MEHHHQHHRH…YHKPDENRLP (157 aa)) are disordered. The segment covering 25–36 (VPPPHVDAPPQP) has biased composition (pro residues). Polar residues predominate over residues 136 to 146 (HSSNQPQSSSG). Positions 168–315 (TVKVYSKAEP…KGDNQLWKIF (148 aa)) constitute a Ricin B-type lectin domain.

Interacts (via N-terminus) with ATS3A and ATS3B. Expressed in roots, rosette leaves, stems, cauline leaves and flowers.

The protein localises to the nucleus. The protein resides in the cytoplasm. Lectin which binds carbohydrates in vitro. Interacts through its lectin domain with glycan structures containing one or more Lewis X, Lewis Y or lactosamine motifs. May play a role in abiotic stress responses. May play a role in abscisic acid-induced stomatal closure. May play a role in disease resistance against Pseudomonas syringae through its involvement in stomatal movement. The chain is Ricin B-like lectin EULS3 from Arabidopsis thaliana (Mouse-ear cress).